The sequence spans 584 residues: Mitochondrial ribonuclease P catalytic subunit (584 aa).

The transit peptide at 1-43 (MTFYLSGFRSIPKLWKSNPYFELGPATSSTPFFLCAIGNQQRW) directs the protein to the mitochondrion. The PRORP domain occupies 339 to 575 (IQKSGQCSGC…SCEVPTKWLC (237 aa)). Zn(2+)-binding residues include Cys-345 and Cys-348. The Mg(2+) site is built by Asp-406, Asp-475, Asp-476, and Asp-496. Positions 554 and 575 each coordinate Zn(2+).

The protein belongs to the PPR family. P subfamily. Catalytic component of mitochondrial ribonuclease P, a complex composed of TRMT10C/MRPP1, HSD17B10/MRPP2 and PRORP/MRPP3. It depends on Mg(2+) as a cofactor. Mn(2+) serves as cofactor. In terms of processing, degraded by LONP1 following mitochondrial unfolded protein response, probably leading to inhibit translation in mitochondrion. Detected, after the onset of hearing, in the organ of Corti around the afferent and efferent synapses of the inner hair cells and the efferent synapses of the outer hair cells.

It is found in the mitochondrion. The enzyme catalyses Endonucleolytic cleavage of RNA, removing 5'-extranucleotides from tRNA precursor.. Functionally, catalytic ribonuclease component of mitochondrial ribonuclease P, a complex composed of TRMT10C/MRPP1, HSD17B10/MRPP2 and PRORP, which cleaves tRNA molecules in their 5'-ends. The presence of TRMT10C/MRPP1, HSD17B10/MRPP2 is required to catalyze tRNA molecules in their 5'-ends. The sequence is that of Mitochondrial ribonuclease P catalytic subunit (Prorp) from Mus musculus (Mouse).